The primary structure comprises 527 residues: Phosphoenolpyruvate carboxykinase (ATP) (527 aa).

Substrate contacts are provided by Arg56, Tyr192, and Lys198. ATP contacts are provided by residues Lys198, His217, and Gly233–Thr241. The Mn(2+) site is built by Lys198 and His217. Asp254 contacts Mn(2+). Positions 282, 319, and 444 each coordinate ATP. Arg319 is a substrate binding site.

It belongs to the phosphoenolpyruvate carboxykinase (ATP) family. It depends on Mn(2+) as a cofactor.

The protein localises to the cytoplasm. The enzyme catalyses oxaloacetate + ATP = phosphoenolpyruvate + ADP + CO2. Its pathway is carbohydrate biosynthesis; gluconeogenesis. In terms of biological role, involved in the gluconeogenesis. Catalyzes the conversion of oxaloacetate (OAA) to phosphoenolpyruvate (PEP) through direct phosphoryl transfer between the nucleoside triphosphate and OAA. The chain is Phosphoenolpyruvate carboxykinase (ATP) from Bacillus subtilis (strain 168).